A 154-amino-acid chain; its full sequence is Nuclear cap-binding protein subunit 2 (154 aa).

A disordered region spans residues methionine 1–glutamate 23. The span at serine 9 to glutamate 23 shows a compositional bias: basic and acidic residues. MRNA is bound by residues tyrosine 10, tyrosine 33, arginine 102–aspartate 106, arginine 113–arginine 117, and glutamine 123–valine 124. An RRM domain is found at threonine 30–glycine 108.

The protein belongs to the RRM NCBP2 family. In terms of assembly, component of the nuclear cap-binding complex (CBC), a heterodimer composed of Cbp80 and Cbp20 that interacts with m7GpppG-capped RNA. Interacts with Ars2.

It localises to the nucleus. Component of the cap-binding complex (CBC), which binds co-transcriptionally to the 5' cap of pre-mRNAs and is involved in various processes such as pre-mRNA splicing and RNA-mediated gene silencing (RNAi). The CBC complex is involved in miRNA-mediated RNA interference via its interaction with Ars2 and is required for primary microRNAs (miRNAs) processing. Also involved in innate immunity via the short interfering RNAs (siRNAs) processing machinery by restricting the viral RNA production. In the CBC complex, Cbp20 recognizes and binds capped RNAs (m7GpppG-capped RNA) but requires Cbp80 to stabilize the movement of its N-terminal loop and lock the CBC into a high affinity cap-binding state with the cap structure. This is Nuclear cap-binding protein subunit 2 (Cbp20) from Drosophila grimshawi (Hawaiian fruit fly).